The sequence spans 347 residues: GMP reductase (347 aa).

An NADP(+)-binding site is contributed by 108–131 (ADFEKTKQILDLNPALNFVCIDVA). K(+) is bound by residues glycine 181 and glycine 183. The active-site Thioimidate intermediate is cysteine 186. 216–239 (IVSDGGCTTPGDVAKAFGGGADFV) lines the NADP(+) pocket.

It belongs to the IMPDH/GMPR family. GuaC type 1 subfamily. In terms of assembly, homotetramer.

It carries out the reaction IMP + NH4(+) + NADP(+) = GMP + NADPH + 2 H(+). Its function is as follows. Catalyzes the irreversible NADPH-dependent deamination of GMP to IMP. It functions in the conversion of nucleobase, nucleoside and nucleotide derivatives of G to A nucleotides, and in maintaining the intracellular balance of A and G nucleotides. This Escherichia coli (strain SMS-3-5 / SECEC) protein is GMP reductase.